We begin with the raw amino-acid sequence, 158 residues long: MKILGIDPGTRNMGYAVLEKNVNKISLIEAGLIKMKPENLQFQLTQMCEAIDQIFEFHKIDEVAIESMFYAYNPQSVLKLAQFRGGLSLKILQVFGNFAEYTPLQIKKNVTGKAKADKTQVAFMVKKMLGISKDIKPLDVTDAIAIAITHAHNLRGVK.

Residues Asp-7, Glu-66, and Asp-139 contribute to the active site. Mg(2+) contacts are provided by Asp-7, Glu-66, and Asp-139.

It belongs to the RuvC family. As to quaternary structure, homodimer which binds Holliday junction (HJ) DNA. The HJ becomes 2-fold symmetrical on binding to RuvC with unstacked arms; it has a different conformation from HJ DNA in complex with RuvA. In the full resolvosome a probable DNA-RuvA(4)-RuvB(12)-RuvC(2) complex forms which resolves the HJ. Requires Mg(2+) as cofactor.

Its subcellular location is the cytoplasm. It carries out the reaction Endonucleolytic cleavage at a junction such as a reciprocal single-stranded crossover between two homologous DNA duplexes (Holliday junction).. In terms of biological role, the RuvA-RuvB-RuvC complex processes Holliday junction (HJ) DNA during genetic recombination and DNA repair. Endonuclease that resolves HJ intermediates. Cleaves cruciform DNA by making single-stranded nicks across the HJ at symmetrical positions within the homologous arms, yielding a 5'-phosphate and a 3'-hydroxyl group; requires a central core of homology in the junction. The consensus cleavage sequence is 5'-(A/T)TT(C/G)-3'. Cleavage occurs on the 3'-side of the TT dinucleotide at the point of strand exchange. HJ branch migration catalyzed by RuvA-RuvB allows RuvC to scan DNA until it finds its consensus sequence, where it cleaves and resolves the cruciform DNA. This is Crossover junction endodeoxyribonuclease RuvC from Campylobacter hominis (strain ATCC BAA-381 / DSM 21671 / CCUG 45161 / LMG 19568 / NCTC 13146 / CH001A).